We begin with the raw amino-acid sequence, 339 residues long: MO25-like protein 3 (339 aa).

It belongs to the Mo25 family.

This chain is MO25-like protein 3 (mop-25.3), found in Caenorhabditis elegans.